Here is a 74-residue protein sequence, read N- to C-terminus: Sec-independent protein translocase protein TatA (74 aa).

The helical transmembrane segment at 1–21 (MGSMSWIHWVIVLGIVALLFG) threads the bilayer. Residues 51 to 74 (EVADNKAKSALPRTEAEAEELRKS) are disordered. Residues 64-74 (TEAEAEELRKS) show a composition bias toward basic and acidic residues.

It belongs to the TatA/E family. In terms of assembly, the Tat system comprises two distinct complexes: a TatABC complex, containing multiple copies of TatA, TatB and TatC subunits, and a separate TatA complex, containing only TatA subunits. Substrates initially bind to the TatABC complex, which probably triggers association of the separate TatA complex to form the active translocon.

The protein resides in the cell inner membrane. Its function is as follows. Part of the twin-arginine translocation (Tat) system that transports large folded proteins containing a characteristic twin-arginine motif in their signal peptide across membranes. TatA could form the protein-conducting channel of the Tat system. The protein is Sec-independent protein translocase protein TatA of Caulobacter vibrioides (strain ATCC 19089 / CIP 103742 / CB 15) (Caulobacter crescentus).